The following is a 308-amino-acid chain: D-alanine--D-alanine ligase (308 aa).

The ATP-grasp domain occupies 104–304 (KQALVPHGIP…YAELVERIVE (201 aa)). 131–187 (LPRPYVLKPVNEGSSVGVAIVRDDSNYGNPISRDALGPWQQFDRLLAEPFIKGRELT) is a binding site for ATP. Mg(2+)-binding residues include aspartate 255, glutamate 271, and asparagine 273.

This sequence belongs to the D-alanine--D-alanine ligase family. It depends on Mg(2+) as a cofactor. The cofactor is Mn(2+).

It is found in the cytoplasm. It catalyses the reaction 2 D-alanine + ATP = D-alanyl-D-alanine + ADP + phosphate + H(+). It functions in the pathway cell wall biogenesis; peptidoglycan biosynthesis. Functionally, cell wall formation. The protein is D-alanine--D-alanine ligase of Sphingopyxis alaskensis (strain DSM 13593 / LMG 18877 / RB2256) (Sphingomonas alaskensis).